A 276-amino-acid polypeptide reads, in one-letter code: 4-hydroxy-tetrahydrodipicolinate reductase (276 aa).

NAD(+) is bound by residues 18 to 23 (GASGRM) and Asp44. Arg45 contributes to the NADP(+) binding site. Residues 107-109 (GTT) and 131-134 (APNM) each bind NAD(+). Residue His164 is the Proton donor/acceptor of the active site. Residue His165 coordinates (S)-2,3,4,5-tetrahydrodipicolinate. Residue Lys168 is the Proton donor of the active site. 174-175 (GT) serves as a coordination point for (S)-2,3,4,5-tetrahydrodipicolinate.

The protein belongs to the DapB family.

The protein localises to the cytoplasm. The catalysed reaction is (S)-2,3,4,5-tetrahydrodipicolinate + NAD(+) + H2O = (2S,4S)-4-hydroxy-2,3,4,5-tetrahydrodipicolinate + NADH + H(+). It catalyses the reaction (S)-2,3,4,5-tetrahydrodipicolinate + NADP(+) + H2O = (2S,4S)-4-hydroxy-2,3,4,5-tetrahydrodipicolinate + NADPH + H(+). Its pathway is amino-acid biosynthesis; L-lysine biosynthesis via DAP pathway; (S)-tetrahydrodipicolinate from L-aspartate: step 4/4. Functionally, catalyzes the conversion of 4-hydroxy-tetrahydrodipicolinate (HTPA) to tetrahydrodipicolinate. This Aromatoleum aromaticum (strain DSM 19018 / LMG 30748 / EbN1) (Azoarcus sp. (strain EbN1)) protein is 4-hydroxy-tetrahydrodipicolinate reductase.